A 146-amino-acid chain; its full sequence is ATP synthase epsilon chain (146 aa).

Residues 102-122 are disordered; it reads QSAKKRAEQHMQEAKEKHNER.

The protein belongs to the ATPase epsilon chain family. F-type ATPases have 2 components, CF(1) - the catalytic core - and CF(0) - the membrane proton channel. CF(1) has five subunits: alpha(3), beta(3), gamma(1), delta(1), epsilon(1). CF(0) has three main subunits: a, b and c.

The protein localises to the cell membrane. In terms of biological role, produces ATP from ADP in the presence of a proton gradient across the membrane. The protein is ATP synthase epsilon chain of Lactobacillus gasseri (strain ATCC 33323 / DSM 20243 / BCRC 14619 / CIP 102991 / JCM 1131 / KCTC 3163 / NCIMB 11718 / NCTC 13722 / AM63).